A 439-amino-acid polypeptide reads, in one-letter code: Xylose isomerase (439 aa).

Active-site residues include H101 and D104. The Mg(2+) site is built by E232, E268, H271, D296, D307, D309, and D339.

Belongs to the xylose isomerase family. Homotetramer. It depends on Mg(2+) as a cofactor.

Its subcellular location is the cytoplasm. It catalyses the reaction alpha-D-xylose = alpha-D-xylulofuranose. This Yersinia pseudotuberculosis serotype O:1b (strain IP 31758) protein is Xylose isomerase.